Here is a 248-residue protein sequence, read N- to C-terminus: Probable transcriptional regulatory protein HCH_04926 (248 aa).

This sequence belongs to the TACO1 family.

Its subcellular location is the cytoplasm. The polypeptide is Probable transcriptional regulatory protein HCH_04926 (Hahella chejuensis (strain KCTC 2396)).